A 138-amino-acid polypeptide reads, in one-letter code: Basic phospholipase A2 Cll-N6 (138 aa).

The N-terminal stretch at 1–16 is a signal peptide; sequence MRTFWIVAVLLVGVEG. Intrachain disulfides connect C42-C131, C44-C60, C59-C111, C65-C138, C66-C104, C73-C97, and C91-C102. Ca(2+) contacts are provided by Y43, G45, and G47. H63 is a catalytic residue. D64 is a binding site for Ca(2+). Residue D105 is part of the active site.

As to quaternary structure, monomer. Ca(2+) serves as cofactor. Expressed by the venom gland.

Its subcellular location is the secreted. It catalyses the reaction a 1,2-diacyl-sn-glycero-3-phosphocholine + H2O = a 1-acyl-sn-glycero-3-phosphocholine + a fatty acid + H(+). Its function is as follows. Snake venom phospholipase A2 (PLA2) that shows myotoxic activities. PLA2 catalyzes the calcium-dependent hydrolysis of the 2-acyl groups in 3-sn-phosphoglycerides. The protein is Basic phospholipase A2 Cll-N6 of Crotalus lepidus lepidus (Mottled rock rattlesnake).